Consider the following 247-residue polypeptide: uncharacterized protein (247 aa).

The protein to M.pneumoniae MPN_635 N-terminal region.

This is an uncharacterized protein from Mycoplasma pneumoniae (strain ATCC 29342 / M129 / Subtype 1) (Mycoplasmoides pneumoniae).